A 316-amino-acid chain; its full sequence is Acetyl-coenzyme A carboxylase carboxyl transferase subunit alpha (316 aa).

One can recognise a CoA carboxyltransferase C-terminal domain in the interval 24–291 (NIKDKADIVD…KEALIQQLNE (268 aa)).

The protein belongs to the AccA family. Acetyl-CoA carboxylase is a heterohexamer composed of biotin carboxyl carrier protein (AccB), biotin carboxylase (AccC) and two subunits each of ACCase subunit alpha (AccA) and ACCase subunit beta (AccD).

It localises to the cytoplasm. The catalysed reaction is N(6)-carboxybiotinyl-L-lysyl-[protein] + acetyl-CoA = N(6)-biotinyl-L-lysyl-[protein] + malonyl-CoA. The protein operates within lipid metabolism; malonyl-CoA biosynthesis; malonyl-CoA from acetyl-CoA: step 1/1. In terms of biological role, component of the acetyl coenzyme A carboxylase (ACC) complex. First, biotin carboxylase catalyzes the carboxylation of biotin on its carrier protein (BCCP) and then the CO(2) group is transferred by the carboxyltransferase to acetyl-CoA to form malonyl-CoA. The chain is Acetyl-coenzyme A carboxylase carboxyl transferase subunit alpha from Ruthia magnifica subsp. Calyptogena magnifica.